Reading from the N-terminus, the 276-residue chain is Ribosomal RNA small subunit methyltransferase A (276 aa).

Residues asparagine 24, leucine 26, glycine 51, glutamate 72, aspartate 97, and asparagine 118 each contribute to the S-adenosyl-L-methionine site.

The protein belongs to the class I-like SAM-binding methyltransferase superfamily. rRNA adenine N(6)-methyltransferase family. RsmA subfamily.

The protein resides in the cytoplasm. It carries out the reaction adenosine(1518)/adenosine(1519) in 16S rRNA + 4 S-adenosyl-L-methionine = N(6)-dimethyladenosine(1518)/N(6)-dimethyladenosine(1519) in 16S rRNA + 4 S-adenosyl-L-homocysteine + 4 H(+). Functionally, specifically dimethylates two adjacent adenosines (A1518 and A1519) in the loop of a conserved hairpin near the 3'-end of 16S rRNA in the 30S particle. May play a critical role in biogenesis of 30S subunits. In Clostridium acetobutylicum (strain ATCC 824 / DSM 792 / JCM 1419 / IAM 19013 / LMG 5710 / NBRC 13948 / NRRL B-527 / VKM B-1787 / 2291 / W), this protein is Ribosomal RNA small subunit methyltransferase A.